We begin with the raw amino-acid sequence, 354 residues long: MNILERAALTALHRMDPEKAHSLSLSALRSGLVPLPGPVTSPRLATVVGGLVLPNPVGLAAGYDKNAVALAALMRAGFGFLEVGAATPRPQPGNPQPRLFRLTEDRAAINRFGFNNDGAATICARLAMRPRGAVPVGLNLGANKDSPDRAADFAAVLAACGPHADFATVNVSSPNTERLRDLQGRQALTALLEGVMQVQAGFARPVPVFLKIAPDLSDADLAEIAEVALASGIAGIVATNTTLARDGLRSAHARETGGLSGAPLFERSTRVLARLSELTEGRLPLIGVGGVASAEEAYAKIRAGASAVQLYTAMVYQGIGLAARIARGLDALLLRDGFGSVAEAVGTGRADWLT.

FMN is bound by residues A61–K65 and A85. K65 contributes to the substrate binding site. N110–F114 contributes to the substrate binding site. Positions 139 and 170 each coordinate FMN. Position 170 (N170) interacts with substrate. The active-site Nucleophile is the S173. N175 serves as a coordination point for substrate. 2 residues coordinate FMN: K211 and T239. N240–T241 contributes to the substrate binding site. Residues G261, G290, and Y311 to T312 contribute to the FMN site.

This sequence belongs to the dihydroorotate dehydrogenase family. Type 2 subfamily. In terms of assembly, monomer. FMN serves as cofactor.

The protein resides in the cell membrane. It carries out the reaction (S)-dihydroorotate + a quinone = orotate + a quinol. It functions in the pathway pyrimidine metabolism; UMP biosynthesis via de novo pathway; orotate from (S)-dihydroorotate (quinone route): step 1/1. In terms of biological role, catalyzes the conversion of dihydroorotate to orotate with quinone as electron acceptor. The protein is Dihydroorotate dehydrogenase (quinone) of Cereibacter sphaeroides (strain ATCC 17023 / DSM 158 / JCM 6121 / CCUG 31486 / LMG 2827 / NBRC 12203 / NCIMB 8253 / ATH 2.4.1.) (Rhodobacter sphaeroides).